An 838-amino-acid polypeptide reads, in one-letter code: U1 SNP1-associating protein 1 (838 aa).

The Cytoplasmic segment spans residues 1–536 (MSEYLAQTPC…VRPLRNSFPL (536 aa)). The tract at residues 31-240 (HPLSTVGRLL…DFAPAHNSFF (210 aa)) is required for ERAD-L function. Residues 259 to 318 (ERFVLEFISDATLSITQMNVKPDTTVKQVKDFICSVYTHSLNLRRNDIKLIYKGQLLHEN) form the Ubiquitin-like domain. The segment at 319-418 (NFAGNSSKIS…VPTDELYRKC (100 aa)) is important for HRD1 oligomer formation. The interval 345–535 (QEYTESGPGF…VVRPLRNSFP (191 aa)) is interaction with HRD1. S374, S376, and S379 each carry phosphoserine. A required for ERAD-L function and HRD1 oligomer formation region spans residues 437 to 490 (SSYLSVIKGDYGEIKIPISSNDYRINGDNILLSPSAIEQLESALNFKIERPRDS). Residues 537-559 (LLVLIRTFYLIGYNSLVPFFIIL) traverse the membrane as a helical segment. At 560–563 (EFGS) the chain is on the extracellular side. The helical transmembrane segment at 564–583 (FLPWKYIILLSLLFIFRTVW) threads the bilayer. Residues 584–838 (NTQEVWNLWR…QPHLYIPDED (255 aa)) are Cytoplasmic-facing. Residues 584–838 (NTQEVWNLWR…QPHLYIPDED (255 aa)) are interaction with DER1. The interval 795 to 838 (ARDREQPAPSAQQQENEDEALIIPDEEEPTATGAQPHLYIPDED) is disordered. A compositionally biased stretch (acidic residues) spans 809-823 (ENEDEALIIPDEEEP).

Component of the HRD1 ubiquitin ligase complex which contains the E3 ligase HRD1, its cofactors HRD3, USA1 and DER1, substrate recruiting factor YOS9 and CDC48-binding protein UBX2. Within the complex, interacts directly with HRD1 (via N-terminus) and DER1 (via C-terminus) and indirectly with HRD3. In ERAD-L, HRD3 and YOS9 jointly bind misfolded glycoproteins in the endoplasmic reticulum (ER) lumen. Movement of ERAD-L substrates through the ER membrane is facilitated by HRD1 and DER1 which have lateral gates facing each other and which distort the membrane region between the lateral gates, making it much thinner than a normal phospholipid bilayer. Substrates insert into the membrane as a hairpin loop with one strand interacting with DER1 and the other with HRD1. The HRD1 complex interacts with the heterotrimeric CDC48-NPL4-UFD1 ATPase complex which is recruited by UBX2 via its interaction with CDC48 and which moves ubiquitinated substrates to the cytosol for targeting to the proteasome.

The protein localises to the endoplasmic reticulum membrane. In terms of biological role, scaffold protein of the endoplasmic reticulum-associated degradation (ERAD) (also known as endoplasmic reticulum quality control, ERQC) pathway involved in ubiquitin-dependent degradation of misfolded endoplasmic reticulum proteins. Component of the HRD1 ubiquitin ligase complex, which is part of the ERAD-L and ERAD-M pathways responsible for the rapid degradation of soluble lumenal and membrane proteins with misfolded lumenal domains (ERAD-L), or ER-membrane proteins with misfolded transmembrane domains (ERAD-M). Has multiple functions in ERAD including recruitment of DER1 to the HRD1 ubiquitin ligase, and regulation of HRD1 activity. Involved in oligomerization of HRD1 and in HRD1 autoubiquitination and degradation. The polypeptide is U1 SNP1-associating protein 1 (USA1) (Saccharomyces cerevisiae (strain ATCC 204508 / S288c) (Baker's yeast)).